Here is a 276-residue protein sequence, read N- to C-terminus: Undecaprenyl-diphosphatase 1 (276 aa).

7 helical membrane-spanning segments follow: residues 4-24 (ILIC…FLPV), 45-62 (KTFD…VCWE), 83-103 (FTLN…LFEK), 108-128 (VLFS…IILW), 187-207 (VATE…TLYE), 217-237 (VDSL…AFVC), and 252-272 (VFAW…YSGW).

It belongs to the UppP family.

Its subcellular location is the cell inner membrane. The catalysed reaction is di-trans,octa-cis-undecaprenyl diphosphate + H2O = di-trans,octa-cis-undecaprenyl phosphate + phosphate + H(+). Its function is as follows. Catalyzes the dephosphorylation of undecaprenyl diphosphate (UPP). Confers resistance to bacitracin. The protein is Undecaprenyl-diphosphatase 1 of Burkholderia ambifaria (strain ATCC BAA-244 / DSM 16087 / CCUG 44356 / LMG 19182 / AMMD) (Burkholderia cepacia (strain AMMD)).